A 212-amino-acid chain; its full sequence is Thymidylate kinase (212 aa).

Residue A2 is modified to N-acetylalanine. ATP contacts are provided by residues R16–T21 and R97. Residues L133 to Q157 are LID. ATP is bound by residues K182 and R192.

Belongs to the thymidylate kinase family. As to quaternary structure, homodimer. Requires Mg(2+) as cofactor.

The enzyme catalyses dTMP + ATP = dTDP + ADP. The protein operates within pyrimidine metabolism; dTTP biosynthesis. Functionally, catalyzes the phosphorylation of thymidine monophosphate (dTMP) to thymidine diphosphate (dTDP), the immediate precursor for the DNA building block dTTP, with ATP as the preferred phosphoryl donor in the presence of Mg(2+). The sequence is that of Thymidylate kinase (Dtymk) from Mus musculus (Mouse).